The following is a 142-amino-acid chain: Ctenidin-3 (142 aa).

Positions 1 to 19 (MKHLIPLIVMASVVLAVYA) are cleaved as a signal peptide. A Tyrosine amide modification is found at tyrosine 139.

Expressed in hemocytes (at protein level).

It localises to the secreted. Its function is as follows. Antimicrobial protein with bacteriostatic activity against the Gram-negative bacterium E.coli, and very weak activity against the Gram-positive bacterium S.aureus. Lacks activity against the yeast C.albicans. This Cupiennius salei (American wandering spider) protein is Ctenidin-3.